Consider the following 144-residue polypeptide: Transcription antitermination protein NusB (144 aa).

It belongs to the NusB family.

In terms of biological role, involved in transcription antitermination. Required for transcription of ribosomal RNA (rRNA) genes. Binds specifically to the boxA antiterminator sequence of the ribosomal RNA (rrn) operons. In Haemophilus influenzae (strain PittGG), this protein is Transcription antitermination protein NusB.